A 285-amino-acid polypeptide reads, in one-letter code: 1,4-dihydroxy-2-naphthoyl-CoA synthase (285 aa).

Residues R45, 84 to 88 (AGGDQ), Y97, 129 to 133 (YSIGG), T155, S161, Y258, and K273 each bind substrate. 154–156 (QTG) contributes to the hydrogencarbonate binding site.

Belongs to the enoyl-CoA hydratase/isomerase family. MenB subfamily. In terms of assembly, homohexamer. Hydrogencarbonate serves as cofactor.

It catalyses the reaction 2-succinylbenzoyl-CoA + H(+) = 1,4-dihydroxy-2-naphthoyl-CoA + H2O. It participates in quinol/quinone metabolism; 1,4-dihydroxy-2-naphthoate biosynthesis; 1,4-dihydroxy-2-naphthoate from chorismate: step 6/7. It functions in the pathway quinol/quinone metabolism; menaquinone biosynthesis. In terms of biological role, converts o-succinylbenzoyl-CoA (OSB-CoA) to 1,4-dihydroxy-2-naphthoyl-CoA (DHNA-CoA). This chain is 1,4-dihydroxy-2-naphthoyl-CoA synthase, found in Salmonella typhimurium (strain LT2 / SGSC1412 / ATCC 700720).